The chain runs to 407 residues: Homeobox even-skipped homolog protein 1 (407 aa).

Disordered regions lie at residues 29–120 (EAVG…SDFY) and 137–179 (EYQH…ACSA). Over residues 102-114 (DSLSGQGQPSSSD) the composition is skewed to polar residues. The homeobox DNA-binding region spans 183 to 242 (MRRYRTAFTREQIARLEKEFYRENYVSRPRRCELAAALNLPETTIKVWFQNRRMKDKRQR).

This sequence belongs to the even-skipped homeobox family.

It localises to the nucleus. In terms of biological role, may play a role in the specification of neuronal cell types. This chain is Homeobox even-skipped homolog protein 1 (EVX1), found in Homo sapiens (Human).